Here is a 300-residue protein sequence, read N- to C-terminus: Phosphatidylserine decarboxylase proenzyme (300 aa).

Catalysis depends on charge relay system; for autoendoproteolytic cleavage activity residues aspartate 117, histidine 173, and serine 260. Serine 260 serves as the catalytic Schiff-base intermediate with substrate; via pyruvic acid; for decarboxylase activity. At serine 260 the chain carries Pyruvic acid (Ser); by autocatalysis.

Belongs to the phosphatidylserine decarboxylase family. PSD-B subfamily. Prokaryotic type II sub-subfamily. Heterodimer of a large membrane-associated beta subunit and a small pyruvoyl-containing alpha subunit. It depends on pyruvate as a cofactor. In terms of processing, is synthesized initially as an inactive proenzyme. Formation of the active enzyme involves a self-maturation process in which the active site pyruvoyl group is generated from an internal serine residue via an autocatalytic post-translational modification. Two non-identical subunits are generated from the proenzyme in this reaction, and the pyruvate is formed at the N-terminus of the alpha chain, which is derived from the carboxyl end of the proenzyme. The autoendoproteolytic cleavage occurs by a canonical serine protease mechanism, in which the side chain hydroxyl group of the serine supplies its oxygen atom to form the C-terminus of the beta chain, while the remainder of the serine residue undergoes an oxidative deamination to produce ammonia and the pyruvoyl prosthetic group on the alpha chain. During this reaction, the Ser that is part of the protease active site of the proenzyme becomes the pyruvoyl prosthetic group, which constitutes an essential element of the active site of the mature decarboxylase.

The protein resides in the cell membrane. The enzyme catalyses a 1,2-diacyl-sn-glycero-3-phospho-L-serine + H(+) = a 1,2-diacyl-sn-glycero-3-phosphoethanolamine + CO2. Its pathway is phospholipid metabolism; phosphatidylethanolamine biosynthesis; phosphatidylethanolamine from CDP-diacylglycerol: step 2/2. Functionally, catalyzes the formation of phosphatidylethanolamine (PtdEtn) from phosphatidylserine (PtdSer). This is Phosphatidylserine decarboxylase proenzyme from Fusobacterium nucleatum subsp. nucleatum (strain ATCC 25586 / DSM 15643 / BCRC 10681 / CIP 101130 / JCM 8532 / KCTC 2640 / LMG 13131 / VPI 4355).